The sequence spans 553 residues: 5'-nucleotidase (553 aa).

The N-terminal stretch at Met-1–Gly-21 is a signal peptide. Cys-22 carries N-palmitoyl cysteine lipidation. Cys-22 carries S-diacylglycerol cysteine lipidation. Residues Asp-45, His-47, Asp-88, Asn-120, His-221, His-256, and Gln-258 each coordinate a divalent metal cation. Substrate is bound by residues Phe-432 and Phe-501–Asp-507.

The protein belongs to the 5'-nucleotidase family. Chloride serves as cofactor. Requires Mg(2+) as cofactor.

It is found in the cell outer membrane. The catalysed reaction is a ribonucleoside 5'-phosphate + H2O = a ribonucleoside + phosphate. In terms of biological role, degradation of extracellular 5'-nucleotides for nutritional needs. The polypeptide is 5'-nucleotidase (nutA) (Vibrio cholerae serotype O1 (strain ATCC 39315 / El Tor Inaba N16961)).